The primary structure comprises 122 residues: Ribosome-binding factor A (122 aa).

The protein belongs to the RbfA family. In terms of assembly, monomer. Binds 30S ribosomal subunits, but not 50S ribosomal subunits or 70S ribosomes.

The protein resides in the cytoplasm. Its function is as follows. One of several proteins that assist in the late maturation steps of the functional core of the 30S ribosomal subunit. Associates with free 30S ribosomal subunits (but not with 30S subunits that are part of 70S ribosomes or polysomes). Required for efficient processing of 16S rRNA. May interact with the 5'-terminal helix region of 16S rRNA. This Prosthecochloris aestuarii (strain DSM 271 / SK 413) protein is Ribosome-binding factor A.